We begin with the raw amino-acid sequence, 297 residues long: Small ribosomal subunit protein uS2 (297 aa).

Residues 252 to 297 (GVPGTAFSAATAAPTSWEADGGDWAASSAAPAGESWAETQPAEAKW) are disordered. Over residues 256-289 (TAFSAATAAPTSWEADGGDWAASSAAPAGESWAE) the composition is skewed to low complexity.

This sequence belongs to the universal ribosomal protein uS2 family. As to quaternary structure, component of the small ribosomal subunit. Mature ribosomes consist of a small (40S) and a large (60S) subunit. The 40S subunit contains about 33 different proteins and 1 molecule of RNA (18S). The 60S subunit contains about 49 different proteins and 3 molecules of RNA (25S, 5.8S and 5S). Interacts with rps21.

The protein localises to the cytoplasm. Required for the assembly and/or stability of the 40S ribosomal subunit. Required for the processing of the 20S rRNA-precursor to mature 18S rRNA in a late step of the maturation of 40S ribosomal subunits. This is Small ribosomal subunit protein uS2 (rps0) from Aspergillus fumigatus (strain CBS 144.89 / FGSC A1163 / CEA10) (Neosartorya fumigata).